Consider the following 175-residue polypeptide: MESIILSIAIFIGVLLGTSVGAGSGSSISPDVDAGSGSRTSPDVDAGSGSRISAGVGTFSGSSTSPDVDAGSGSSTSPDVGAGSGSSISAGVGSRIGTGIGSRIGTGIGTGIGSRISTSIGSRISPDVGTSSGNRISTGVSTGISTTMNARVAVLITAAILSAPVTAIALLEARR.

Residues 1–2 (ME) are Extracellular-facing. A helical membrane pass occupies residues 3–23 (SIILSIAIFIGVLLGTSVGAG). Topologically, residues 24–151 (SGSSISPDVD…TGISTTMNAR (128 aa)) are cytoplasmic. The disordered stretch occupies residues 26–88 (SSISPDVDAG…DVGAGSGSSI (63 aa)). Residues 59–78 (FSGSSTSPDVDAGSGSSTSP) are compositionally biased toward polar residues. Residues 152 to 172 (VAVLITAAILSAPVTAIALLE) form a helical membrane-spanning segment. Over 173–175 (ARR) the chain is Extracellular.

It is found in the membrane. This is an uncharacterized protein from Saccharomyces cerevisiae (strain ATCC 204508 / S288c) (Baker's yeast).